The following is a 507-amino-acid chain: ATP synthase subunit alpha (507 aa).

Position 171-178 (Gly-171–Thr-178) interacts with ATP.

It belongs to the ATPase alpha/beta chains family. As to quaternary structure, F-type ATPases have 2 components, CF(1) - the catalytic core - and CF(0) - the membrane proton channel. CF(1) has five subunits: alpha(3), beta(3), gamma(1), delta(1), epsilon(1). CF(0) has three main subunits: a(1), b(2) and c(9-12). The alpha and beta chains form an alternating ring which encloses part of the gamma chain. CF(1) is attached to CF(0) by a central stalk formed by the gamma and epsilon chains, while a peripheral stalk is formed by the delta and b chains.

It is found in the cell inner membrane. The catalysed reaction is ATP + H2O + 4 H(+)(in) = ADP + phosphate + 5 H(+)(out). Its function is as follows. Produces ATP from ADP in the presence of a proton gradient across the membrane. The alpha chain is a regulatory subunit. In Bdellovibrio bacteriovorus (strain ATCC 15356 / DSM 50701 / NCIMB 9529 / HD100), this protein is ATP synthase subunit alpha.